Consider the following 565-residue polypeptide: Arginine--tRNA ligase (565 aa).

Residues 121–131 carry the 'HIGH' region motif; it reads PNIAKPMGMGH.

Belongs to the class-I aminoacyl-tRNA synthetase family. Monomer.

The protein resides in the cytoplasm. It catalyses the reaction tRNA(Arg) + L-arginine + ATP = L-arginyl-tRNA(Arg) + AMP + diphosphate. This Lactobacillus delbrueckii subsp. bulgaricus (strain ATCC BAA-365 / Lb-18) protein is Arginine--tRNA ligase.